The primary structure comprises 367 residues: Cytochrome b (367 aa).

Transmembrane regions (helical) follow at residues 33–53 (FGSLLGICLALQILTGLFLAM), 77–98 (WVLRYMHANGASMFFICLYLHI), 113–133 (WNMGVILLFAVMATAFMGYVL), and 178–198 (FFAFHFLLPFIISALVMVHLL). Histidine 83 and histidine 97 together coordinate heme b. Heme b-binding residues include histidine 182 and histidine 196. Histidine 201 contributes to the a ubiquinone binding site. The next 4 membrane-spanning stretches (helical) occupy residues 226 to 246 (IKDILGFFMMMLILLCLVLFS), 288 to 308 (LGGVLALVLSILILIIIPFLH), 320 to 340 (FSQCLFWLLVADLLTLTWIGG), and 347 to 367 (YIIIGQLASILYFMIIIVIMP).

This sequence belongs to the cytochrome b family. In terms of assembly, the cytochrome bc1 complex contains 11 subunits: 3 respiratory subunits (MT-CYB, CYC1 and UQCRFS1), 2 core proteins (UQCRC1 and UQCRC2) and 6 low-molecular weight proteins (UQCRH/QCR6, UQCRB/QCR7, UQCRQ/QCR8, UQCR10/QCR9, UQCR11/QCR10 and a cleavage product of UQCRFS1). This cytochrome bc1 complex then forms a dimer. Heme b serves as cofactor.

The protein resides in the mitochondrion inner membrane. In terms of biological role, component of the ubiquinol-cytochrome c reductase complex (complex III or cytochrome b-c1 complex) that is part of the mitochondrial respiratory chain. The b-c1 complex mediates electron transfer from ubiquinol to cytochrome c. Contributes to the generation of a proton gradient across the mitochondrial membrane that is then used for ATP synthesis. This is Cytochrome b (MT-CYB) from Hypsugo savii (Savi's pipistrelle).